A 157-amino-acid chain; its full sequence is 3-hydroxyacyl-[acyl-carrier-protein] dehydratase FabZ (157 aa).

The active site involves H58.

This sequence belongs to the thioester dehydratase family. FabZ subfamily.

The protein localises to the cytoplasm. The catalysed reaction is a (3R)-hydroxyacyl-[ACP] = a (2E)-enoyl-[ACP] + H2O. Involved in unsaturated fatty acids biosynthesis. Catalyzes the dehydration of short chain beta-hydroxyacyl-ACPs and long chain saturated and unsaturated beta-hydroxyacyl-ACPs. This is 3-hydroxyacyl-[acyl-carrier-protein] dehydratase FabZ from Rhizobium rhizogenes (strain K84 / ATCC BAA-868) (Agrobacterium radiobacter).